Consider the following 130-residue polypeptide: MYKAETRGISVTVTPRFVEEESSPDESRYFFAYTVEITNNGRDKVQLRSRHWRIVDGRGALQEVRGAGVVGKQPVLGPGESFSYTSGCPLPTPNGTMEGTYTMATADGESFEAAIPAFSLDVPHVRRVMH.

The region spanning 3 to 127 (KAETRGISVT…FSLDVPHVRR (125 aa)) is the ApaG domain.

This chain is Protein ApaG, found in Methylobacterium sp. (strain 4-46).